The chain runs to 719 residues: MALKDYAIEKEKVKKFLQEFYYENELGKKQFKYGTQLVHLAHREQVALYVDLDDIAEDDPELVDSICENAKRYSRLFGDVVQELLPEYKEKEVVNKDVLDVYIEHRLMMEQRSRDPGAVRNPQNQYPSELMRRFELYFRGPSSSKPRVIREVRADSVGKLLTVRGIVTRVSEVKPRMVVATYTCDQCGAETYQPIQSPTFMPLIMCPSQECQTNRSGGRLYLQTRGSKFVKFQEMKIQEHSDQVPVGNIPRSITVVLEGENTRIAQPGDHVSVTGIFLPVLRTGFQQMAQGLLSETYLEAHWIVKMTKSDDDVSGAGELSSEELKQIAEEDFYEKLAASIAPEIYGHEDVKKALLLLLVGGVDQSPQGMKIRGNIHICLMGDPGVAKSQLLSYIDRLAPRSQYTTGRGSSGVGLTAAVLRDSVSGELTLEGGALVLADQGVCCIDEFDKMAEADRTAIHEVMEQQTISIAKAGILTTLNARCSILAAANPAYGRYNPRRSLEQNVQLPAALLSRFDLLWLIQDRPDRDNDLRLAQHITYVHQHSRQPPAQFEPLDMKLMRRYIAMCHERQPTVPESLADYITAAYVEMRREARASKDATYTSARTLLAILRLSTALARLRMVDIVEKEDVNEAIRLMEMSKDSLLGEKGQTARTQRPADVIFATIRELVSRGRSVHFSEAEQRCISRGFTPAQFQAALDEYEELNVWQVNTSRTRITFV.

Alanine 2 bears the N-acetylalanine mark. Glycyl lysine isopeptide (Lys-Gly) (interchain with G-Cter in SUMO2) cross-links involve residues lysine 15 and lysine 28. Serine 314 is modified (phosphoserine). Residues 332 to 538 (FYEKLAASIA…NDLRLAQHIT (207 aa)) enclose the MCM domain. Tyrosine 345 lines the ATP pocket. Residue serine 365 is modified to Phosphoserine. ATP contacts are provided by glycine 384, alanine 386, lysine 387, serine 388, and asparagine 489. Serine 500 carries the phosphoserine modification. The short motif at 513–516 (SRFD) is the Arginine finger element. Arginine 514 is an ATP binding site. Positions 521–564 (IQDRPDRDNDLRLAQHITYVHQHSRQPPAQFEPLDMKLMRRYIA) are interaction with RAD17. Positions 577 to 719 (LADYITAAYV…NTSRTRITFV (143 aa)) are interaction with ATRIP. Arginine 604 is a binding site for ATP. Position 678 is a phosphoserine (serine 678).

The protein belongs to the MCM family. In terms of assembly, component of the MCM2-7 complex. The complex forms a toroidal hexameric ring with the proposed subunit order MCM2-MCM6-MCM4-MCM7-MCM3-MCM5. Component of the CMG helicase complex, a hexameric ring of related MCM2-7 subunits stabilized by CDC45 and the tetrameric GINS complex. Interacts with the ATR-ATRIP complex and with RAD17. Interacts with TIPIN. Interacts with MCMBP. Interacts with ANKRD17. Component of the replisome complex composed of at least DONSON, MCM2, MCM7, PCNA and TICRR. In terms of processing, O-glycosylated (O-GlcNAcylated), in a cell cycle-dependent manner. Ubiquitinated by ECS(LRR1) E3 ubiquitin-protein ligase complex when forks converge following formation of DNA interstrand cross-links. During mitosis, ubiquitinated by TRAIP when forks converge following formation of DNA interstrand cross-links. Short ubiquitin chains on MCM7 promote recruitment of DNA glycosylase NEIL3. If the interstrand cross-link cannot be cleaved by NEIL3, the ubiquitin chains continue to grow on MCM7, promoting the unloading of the CMG helicase complex by the VCP/p97 ATPase.

It localises to the nucleus. The protein resides in the chromosome. It carries out the reaction ATP + H2O = ADP + phosphate + H(+). Its function is as follows. Acts as a component of the MCM2-7 complex (MCM complex) which is the replicative helicase essential for 'once per cell cycle' DNA replication initiation and elongation in eukaryotic cells. Core component of CDC45-MCM-GINS (CMG) helicase, the molecular machine that unwinds template DNA during replication, and around which the replisome is built. The active ATPase sites in the MCM2-7 ring are formed through the interaction surfaces of two neighboring subunits such that a critical structure of a conserved arginine finger motif is provided in trans relative to the ATP-binding site of the Walker A box of the adjacent subunit. The six ATPase active sites, however, are likely to contribute differentially to the complex helicase activity. Uncomplexed form does not show ATPase or DNA helicase. Required for S-phase checkpoint activation upon UV-induced damage. This Mus musculus (Mouse) protein is DNA replication licensing factor MCM7 (Mcm7).